Here is a 246-residue protein sequence, read N- to C-terminus: Probable maleylacetoacetate isomerase 1 (246 aa).

Residues 32 to 116 (TKPILYSYWP…YLEETRPQPA (85 aa)) form the GST N-terminal domain. Glutathione-binding positions include 42–47 (SSCSWR), Val88, 100–101 (DS), Gln140, and 144–146 (NVS). In terms of domain architecture, GST C-terminal spans 121–241 (DPVKRAKIRE…HPSTQPDCPP (121 aa)).

This sequence belongs to the GST superfamily. Zeta family. Requires glutathione as cofactor.

The protein localises to the cytoplasm. The enzyme catalyses 4-maleylacetoacetate = 4-fumarylacetoacetate. It catalyses the reaction RX + glutathione = an S-substituted glutathione + a halide anion + H(+). It participates in amino-acid degradation; L-phenylalanine degradation; acetoacetate and fumarate from L-phenylalanine: step 5/6. Functionally, catalyzes the glutathione dependent oxygenation of dichloroacetic acid to glyoxylic acid in vitro. Possesses low glutathione thioltransferase activity toward 4-hydroxynonenal (4-HNE). Has no glutathione thioltransferase activity with adrenochrome, phenethyl isothiocyanate (PEITC), 5-hydroperoxyeicosatetraenoic acid ((5S)-HpETE), prostaglandin A2 (PGA2) or 2-hydroxyethyldisulfide (HED). This Drosophila melanogaster (Fruit fly) protein is Probable maleylacetoacetate isomerase 1 (GstZ1).